Here is a 202-residue protein sequence, read N- to C-terminus: 3-isopropylmalate dehydratase small subunit (202 aa).

This sequence belongs to the LeuD family. LeuD type 1 subfamily. As to quaternary structure, heterodimer of LeuC and LeuD.

The catalysed reaction is (2R,3S)-3-isopropylmalate = (2S)-2-isopropylmalate. Its pathway is amino-acid biosynthesis; L-leucine biosynthesis; L-leucine from 3-methyl-2-oxobutanoate: step 2/4. Functionally, catalyzes the isomerization between 2-isopropylmalate and 3-isopropylmalate, via the formation of 2-isopropylmaleate. The polypeptide is 3-isopropylmalate dehydratase small subunit (Rhizobium johnstonii (strain DSM 114642 / LMG 32736 / 3841) (Rhizobium leguminosarum bv. viciae)).